Consider the following 562-residue polypeptide: mRNA cleavage and polyadenylation factor CLP1 (562 aa).

The disordered stretch occupies residues 1–27; that stretch reads MSLPGLELSQQPIEARRAPPQPTQISL. ATP-binding positions include glutamate 32, lysine 71, and 154 to 159; that span reads DAGKTS. Residues 415-483 are disordered; sequence EDEYDPSKFD…STTPFTNLPS (69 aa). Over residues 445–479 the composition is skewed to low complexity; that stretch reads SLQPPSGLLPGLRSELPSATTGFPSASTSSTTPFT.

Belongs to the Clp1 family. Clp1 subfamily. As to quaternary structure, component of a pre-mRNA cleavage factor complex. Interacts directly with PCF11.

It localises to the nucleus. Functionally, required for endonucleolytic cleavage during polyadenylation-dependent pre-mRNA 3'-end formation. This Coccidioides immitis (strain RS) (Valley fever fungus) protein is mRNA cleavage and polyadenylation factor CLP1.